A 353-amino-acid chain; its full sequence is MTMKMMVHIYFVSLSLLLLLFHSYAIDIENEITEFFNKMRDTLPAKDSKWLNPACMFGGTMNDMATLGEPFSAKCPPIEDSLLSHRYKDYVVKWERLEKNRRRQVSNKRVKHGDLWIANYTSKFSNRRYLCTVTTKNGDCVQGIVRSHIKKPPSCIPKTYELGTHDKYGIDLYCGILYAKHYNNITWYKDNKEINIDDIKYSQTGKELIIHNPELEDSGRYDCYVHYDDVRIKNDIVVSRCKILTVIPSQDHRFKLILDPKINVTIGEPANITCTAVSTSLLIDDVLIEWENPSGWLIGFDFDVYSVLTSRGGITEATLYFENVTEEYIGNTYKCRGHNYYFEKTLTTTVVLE.

The N-terminal stretch at 1-21 (MTMKMMVHIYFVSLSLLLLLF) is a signal peptide. Ig-like C2-type domains are found at residues 67 to 139 (LGEP…KNGD) and 157 to 239 (PKTY…IVVS). Cystine bridges form between Cys75–Cys131 and Cys174–Cys223. Asn119, Asn184, Asn263, Asn271, and Asn323 each carry an N-linked (GlcNAc...) asparagine; by host glycan. One can recognise an Ig-like V-type domain in the interval 248–347 (PSQDHRFKLI…HNYYFEKTLT (100 aa)). Residues Cys274 and Cys335 are joined by a disulfide bond.

The protein belongs to the interleukin-1 receptor family. Interacts with host IFNA1.

It localises to the secreted. Functionally, counteracts the antiviral effects of host IFN-alpha/beta and key IFN-inducible proteins involved in viral RNA degradation suxh as host OAS1. Acts as a soluble IFN-alpha receptor and thus inhibits the interaction between host IFN-alpha and its receptor. This Homo sapiens (Human) protein is Soluble interferon alpha/beta receptor OPG204 (OPG204).